The chain runs to 398 residues: Acetate kinase (398 aa).

Residue asparagine 7 participates in Mg(2+) binding. Residue lysine 14 coordinates ATP. Arginine 85 is a binding site for substrate. The active-site Proton donor/acceptor is aspartate 142. ATP-binding positions include 202–206, 277–279, and 325–329; these read HLGNG, DMR, and GIGEN. Glutamate 379 contributes to the Mg(2+) binding site.

The protein belongs to the acetokinase family. In terms of assembly, homodimer. It depends on Mg(2+) as a cofactor. Mn(2+) is required as a cofactor.

The protein localises to the cytoplasm. It catalyses the reaction acetate + ATP = acetyl phosphate + ADP. The protein operates within metabolic intermediate biosynthesis; acetyl-CoA biosynthesis; acetyl-CoA from acetate: step 1/2. In terms of biological role, catalyzes the formation of acetyl phosphate from acetate and ATP. Can also catalyze the reverse reaction. The polypeptide is Acetate kinase (Deinococcus radiodurans (strain ATCC 13939 / DSM 20539 / JCM 16871 / CCUG 27074 / LMG 4051 / NBRC 15346 / NCIMB 9279 / VKM B-1422 / R1)).